The following is a 212-amino-acid chain: Abscisic acid receptor PYL10 (212 aa).

Residues 34-191 (YAVGPGQCSS…NLQKLKSVSE (158 aa)) are START-like. Abscisate-binding positions include lysine 70, 107-112 (ASTSTE), 134-140 (RLRNYRS), and glutamate 156. The Gate loop motif lies at 103-107 (SGLPA). A Latch loop motif is present at residues 133-135 (HRL).

It belongs to the PYR/PYL/RCAR abscisic acid intracellular receptor family. As to quaternary structure, homodimer. Interacts with PP2C53. Binding to PP2C53 is dependent on the presence of abscisic acid (ABA). Interacts with PP2C50. Binding to PP2C50 is dependent on the presence of ABA.

It localises to the cytoplasm. The protein resides in the cytosol. It is found in the nucleus. Functionally, inhibits the protein phosphatases PP2C06 and PP2C09 when activated by abscisic acid (ABA). Together with PP2C53, SAPK8 and SAPK10, may form an ABA signaling module involved in stress response. The chain is Abscisic acid receptor PYL10 from Oryza sativa subsp. japonica (Rice).